We begin with the raw amino-acid sequence, 89 residues long: Small ribosomal subunit protein uS15 (89 aa).

Residues 1–24 (MSLNAETKAGIVEKYRRDPSDTGS) form a disordered region. Residues 11 to 20 (IVEKYRRDPS) are compositionally biased toward basic and acidic residues.

Belongs to the universal ribosomal protein uS15 family. In terms of assembly, part of the 30S ribosomal subunit. Forms a bridge to the 50S subunit in the 70S ribosome, contacting the 23S rRNA.

One of the primary rRNA binding proteins, it binds directly to 16S rRNA where it helps nucleate assembly of the platform of the 30S subunit by binding and bridging several RNA helices of the 16S rRNA. Its function is as follows. Forms an intersubunit bridge (bridge B4) with the 23S rRNA of the 50S subunit in the ribosome. This chain is Small ribosomal subunit protein uS15, found in Thioalkalivibrio sulfidiphilus (strain HL-EbGR7).